Consider the following 312-residue polypeptide: Olfactory receptor 10C1 (312 aa).

At methionine 1–glycine 24 the chain is on the extracellular side. N-linked (GlcNAc...) asparagine glycosylation is present at asparagine 4. Residues leucine 25–valine 45 form a helical membrane-spanning segment. At valine 46–alanine 53 the chain is on the cytoplasmic side. Residues leucine 54–serine 74 traverse the membrane as a helical segment. The Extracellular segment spans residues valine 75–leucine 98. Cysteines 96 and 188 form a disulfide. The helical transmembrane segment at glutamine 99 to tyrosine 119 threads the bilayer. Residues aspartate 120–arginine 138 are Cytoplasmic-facing. The chain crosses the membrane as a helical span at residues valine 139–threonine 159. Residues proline 160–leucine 196 lie on the Extracellular side of the membrane. Residues glutamine 197–serine 216 traverse the membrane as a helical segment. At tyrosine 217–alanine 236 the chain is on the cytoplasmic side. The helical transmembrane segment at phenylalanine 237–isoleucine 257 threads the bilayer. Residues tyrosine 258–aspartate 270 are Extracellular-facing. Residues proline 271–leucine 291 traverse the membrane as a helical segment. The Cytoplasmic portion of the chain corresponds to arginine 292–isoleucine 312.

Belongs to the G-protein coupled receptor 1 family.

It localises to the cell membrane. In terms of biological role, odorant receptor. The protein is Olfactory receptor 10C1 (OR10C1) of Homo sapiens (Human).